Here is a 474-residue protein sequence, read N- to C-terminus: Coronin-1C (474 aa).

WD repeat units follow at residues 25–70 (DDIR…GRID), 78–118 (GHTG…LTLS), 128–168 (GHSK…ALIN), 172–202 (MHSDMIYNVSWNRNGSLICTASKDKKVRVID), 215–249 (AHEGARPMRAIFLADGNVFTTGFSRMSERQLALWN), and 263–303 (DTSN…PYVH). Residues 436–474 (QNEAKLDEILKEIKSIKDTICNQDERISKLEQQMAKIAA) are a coiled coil. An N6-acetyllysine modification is found at Lys446.

The protein belongs to the WD repeat coronin family. In terms of assembly, binds F-actin. Interacts with RCC2. Interacts preferentially with nucleotide-free and GDP-bound RAC1. Interacts with VIM (via head domain). Isoform 1 and isoform 2 appear as homotrimers, while isoform 3 seems to exist as monomers. Interacts with MICAL2; this interaction recruits MICAL2 to the actin filaments. Ubiquitous.

Its subcellular location is the cell membrane. The protein localises to the cell projection. The protein resides in the lamellipodium. It is found in the ruffle membrane. It localises to the cytoplasm. Its subcellular location is the cytoskeleton. The protein localises to the cell cortex. The protein resides in the endosome membrane. It is found in the sarcolemma. It localises to the myofibril. Its subcellular location is the sarcomere. The protein localises to the synapse. In terms of biological role, plays a role in directed cell migration by regulating the activation and subcellular location of RAC1. Increases the presence of activated RAC1 at the leading edge of migrating cells. Required for normal organization of the cytoskeleton, including the actin cytoskeleton, microtubules and the vimentin intermediate filaments. Plays a role in endoplasmic reticulum-associated endosome fission: localizes to endosome membrane tubules and promotes recruitment of TMCC1, leading to recruitment of the endoplasmic reticulum to endosome tubules for fission. Endosome membrane fission of early and late endosomes is essential to separate regions destined for lysosomal degradation from carriers to be recycled to the plasma membrane. Required for normal cell proliferation, cell migration, and normal formation of lamellipodia. Required for normal distribution of mitochondria within cells. Functionally, involved in myogenic differentiation. The protein is Coronin-1C of Homo sapiens (Human).